Consider the following 258-residue polypeptide: Acetylglutamate kinase (258 aa).

Substrate contacts are provided by residues 44–45 (GG), arginine 66, and asparagine 158. ATP is bound by residues 181–186 (DVSGIL) and 209–211 (IIT).

This sequence belongs to the acetylglutamate kinase family. ArgB subfamily. In terms of assembly, homodimer.

The protein resides in the cytoplasm. It carries out the reaction N-acetyl-L-glutamate + ATP = N-acetyl-L-glutamyl 5-phosphate + ADP. Its pathway is amino-acid biosynthesis; L-arginine biosynthesis; N(2)-acetyl-L-ornithine from L-glutamate: step 2/4. Catalyzes the ATP-dependent phosphorylation of N-acetyl-L-glutamate. In Shigella sonnei (strain Ss046), this protein is Acetylglutamate kinase.